The sequence spans 362 residues: Adenosine deaminase (362 aa).

Zn(2+) contacts are provided by His19 and His21. Residues His21, Asp23, and Gly181 each contribute to the substrate site. His208 contributes to the Zn(2+) binding site. Glu211 acts as the Proton donor in catalysis. Asp300 is a Zn(2+) binding site.

Belongs to the metallo-dependent hydrolases superfamily. Adenosine and AMP deaminases family. Adenosine deaminase subfamily. It depends on Zn(2+) as a cofactor.

It carries out the reaction adenosine + H2O + H(+) = inosine + NH4(+). It catalyses the reaction 2'-deoxyadenosine + H2O + H(+) = 2'-deoxyinosine + NH4(+). Functionally, catalyzes the hydrolytic deamination of adenosine and 2-deoxyadenosine. The sequence is that of Adenosine deaminase from Mycobacterium marinum (strain ATCC BAA-535 / M).